Reading from the N-terminus, the 141-residue chain is Large ribosomal subunit protein uL22 (141 aa).

It belongs to the universal ribosomal protein uL22 family. Part of the 50S ribosomal subunit.

Functionally, this protein binds specifically to 23S rRNA; its binding is stimulated by other ribosomal proteins, e.g. L4, L17, and L20. It is important during the early stages of 50S assembly. It makes multiple contacts with different domains of the 23S rRNA in the assembled 50S subunit and ribosome. Its function is as follows. The globular domain of the protein is located near the polypeptide exit tunnel on the outside of the subunit, while an extended beta-hairpin is found that lines the wall of the exit tunnel in the center of the 70S ribosome. This Frankia casuarinae (strain DSM 45818 / CECT 9043 / HFP020203 / CcI3) protein is Large ribosomal subunit protein uL22.